The chain runs to 342 residues: 3-isopropylmalate dehydrogenase (342 aa).

Substrate is bound by residues R87, R97, R121, and D212. Positions 212, 236, and 240 each coordinate Mg(2+). Residue 272 to 284 (GSAPDIAGRQLAD) participates in NAD(+) binding. Low complexity predominate over residues 319-328 (RAAAGAAQPS). The disordered stretch occupies residues 319 to 342 (RAAAGAAQPSTRERGEDLAARAAG). A compositionally biased stretch (basic and acidic residues) spans 329 to 342 (TRERGEDLAARAAG).

Belongs to the isocitrate and isopropylmalate dehydrogenases family. LeuB type 2 subfamily. In terms of assembly, homodimer. Mg(2+) is required as a cofactor. Requires Mn(2+) as cofactor.

The protein resides in the cytoplasm. The catalysed reaction is (2R,3S)-3-isopropylmalate + NAD(+) = 4-methyl-2-oxopentanoate + CO2 + NADH. The protein operates within amino-acid biosynthesis; L-leucine biosynthesis; L-leucine from 3-methyl-2-oxobutanoate: step 3/4. Catalyzes the oxidation of 3-carboxy-2-hydroxy-4-methylpentanoate (3-isopropylmalate) to 3-carboxy-4-methyl-2-oxopentanoate. The product decarboxylates to 4-methyl-2 oxopentanoate. In Frankia casuarinae (strain DSM 45818 / CECT 9043 / HFP020203 / CcI3), this protein is 3-isopropylmalate dehydrogenase.